The chain runs to 547 residues: Chaperonin GroEL (547 aa).

ATP contacts are provided by residues 30-33 (TLGP), Lys-51, 87-91 (DGTTT), Gly-415, and Asp-495.

The protein belongs to the chaperonin (HSP60) family. In terms of assembly, forms a cylinder of 14 subunits composed of two heptameric rings stacked back-to-back. Interacts with the co-chaperonin GroES.

The protein resides in the cytoplasm. It catalyses the reaction ATP + H2O + a folded polypeptide = ADP + phosphate + an unfolded polypeptide.. Together with its co-chaperonin GroES, plays an essential role in assisting protein folding. The GroEL-GroES system forms a nano-cage that allows encapsulation of the non-native substrate proteins and provides a physical environment optimized to promote and accelerate protein folding. The chain is Chaperonin GroEL from Pasteurella multocida (strain Pm70).